A 302-amino-acid polypeptide reads, in one-letter code: N-acetylmuramic acid 6-phosphate etherase (302 aa).

In terms of domain architecture, SIS spans 57 to 220 (VSEKLKNNGR…TTAVMIKLGK (164 aa)). The active-site Proton donor is the Glu85. Glu116 is a catalytic residue.

It belongs to the GCKR-like family. MurNAc-6-P etherase subfamily. As to quaternary structure, homodimer.

The enzyme catalyses N-acetyl-D-muramate 6-phosphate + H2O = N-acetyl-D-glucosamine 6-phosphate + (R)-lactate. It participates in amino-sugar metabolism; N-acetylmuramate degradation. Specifically catalyzes the cleavage of the D-lactyl ether substituent of MurNAc 6-phosphate, producing GlcNAc 6-phosphate and D-lactate. This Clostridium acetobutylicum (strain ATCC 824 / DSM 792 / JCM 1419 / IAM 19013 / LMG 5710 / NBRC 13948 / NRRL B-527 / VKM B-1787 / 2291 / W) protein is N-acetylmuramic acid 6-phosphate etherase.